The following is a 318-amino-acid chain: Methionyl-tRNA formyltransferase (318 aa).

(6S)-5,6,7,8-tetrahydrofolate is bound at residue Ser115–Pro118.

The protein belongs to the Fmt family.

The catalysed reaction is L-methionyl-tRNA(fMet) + (6R)-10-formyltetrahydrofolate = N-formyl-L-methionyl-tRNA(fMet) + (6S)-5,6,7,8-tetrahydrofolate + H(+). Its function is as follows. Attaches a formyl group to the free amino group of methionyl-tRNA(fMet). The formyl group appears to play a dual role in the initiator identity of N-formylmethionyl-tRNA by promoting its recognition by IF2 and preventing the misappropriation of this tRNA by the elongation apparatus. This chain is Methionyl-tRNA formyltransferase, found in Deinococcus radiodurans (strain ATCC 13939 / DSM 20539 / JCM 16871 / CCUG 27074 / LMG 4051 / NBRC 15346 / NCIMB 9279 / VKM B-1422 / R1).